Reading from the N-terminus, the 254-residue chain is Kallikrein-4 (254 aa).

Positions methionine 1–glycine 26 are cleaved as a signal peptide. The propeptide occupies serine 27–glutamine 30. Positions isoleucine 31–glutamine 252 constitute a Peptidase S1 domain. 6 disulfides stabilise this stretch: cysteine 37/cysteine 167, cysteine 56/cysteine 72, cysteine 141/cysteine 241, cysteine 148/cysteine 213, cysteine 178/cysteine 192, and cysteine 203/cysteine 228. Position 40 (histidine 40) interacts with Zn(2+). Histidine 71 (charge relay system) is an active-site residue. Glutamate 91 lines the Zn(2+) pocket. The Charge relay system role is filled by aspartate 116. An N-linked (GlcNAc...) asparagine glycan is attached at asparagine 169. Serine 207 (charge relay system) is an active-site residue.

This sequence belongs to the peptidase S1 family. Kallikrein subfamily. N-glycosylated. The N-glycan structures are of complex diantennary or triantennary type, which may be further modified with up to 2 sialic acid residues. As to expression, expressed in prostate.

Its subcellular location is the secreted. Its function is as follows. Has a major role in enamel formation. Required during the maturation stage of tooth development for clearance of enamel proteins and normal structural patterning of the crystalline matrix. The polypeptide is Kallikrein-4 (KLK4) (Homo sapiens (Human)).